The sequence spans 507 residues: MNIVYLTTEAVPFAKTGGLADVCGTLPKVVAAQGHRCAVIMPAFSSIERSLQPIETTDISFAVPMSDQKLIGCRLLKSHLPKDPNDPEDSAEVPVYFIDQPQYFRRPSLYGDANGDYHDNAERFIFYCRAAIIAMTRLGYPVDLVHCNDWQSALVPALLRAASDNVAKTQPIATMLSIHNMAYQGNFGFDAFPWTGLSWDHFRPESFEYYNQLNFLKTGVVTSDVVSTVSPTYALEIQTPEYGCGLDSILQGIPQPVAGIINGIDTNIWNPETDPHLKRNYSVVDWADAKIDNKLALQAEVGLPQDPDVPLLGLIGRLADQKGWDLILPVLKQHLAEARPTQWVVLGSGDPKIEEQLRELTEQHPEQLAAYIGFSDALAHRIEASSDMFIMPSHYEPCGLNQLYSLRYGTPCVVTKTGGLADTIVDATPENVAANLATGFHLNDSSAGALDHAINRALQLRYHSPEKWKNLVEFGMSQDWTWRKSADQYIQLYARTISLNRRRRSGS.

Position 15 (Lys15) interacts with ADP-alpha-D-glucose.

Belongs to the glycosyltransferase 1 family. Bacterial/plant glycogen synthase subfamily.

The enzyme catalyses [(1-&gt;4)-alpha-D-glucosyl](n) + ADP-alpha-D-glucose = [(1-&gt;4)-alpha-D-glucosyl](n+1) + ADP + H(+). It participates in glycan biosynthesis; glycogen biosynthesis. Functionally, synthesizes alpha-1,4-glucan chains using ADP-glucose. The chain is Glycogen synthase from Rhodopirellula baltica (strain DSM 10527 / NCIMB 13988 / SH1).